The following is a 369-amino-acid chain: UDP-N-acetylglucosamine--N-acetylmuramyl-(pentapeptide) pyrophosphoryl-undecaprenol N-acetylglucosamine transferase (369 aa).

Residues 10–12 (TGG), Asn124, Ser195, Ile252, and Gln297 contribute to the UDP-N-acetyl-alpha-D-glucosamine site.

This sequence belongs to the glycosyltransferase 28 family. MurG subfamily.

Its subcellular location is the cell membrane. The enzyme catalyses Mur2Ac(oyl-L-Ala-gamma-D-Glu-L-Lys-D-Ala-D-Ala)-di-trans,octa-cis-undecaprenyl diphosphate + UDP-N-acetyl-alpha-D-glucosamine = beta-D-GlcNAc-(1-&gt;4)-Mur2Ac(oyl-L-Ala-gamma-D-Glu-L-Lys-D-Ala-D-Ala)-di-trans,octa-cis-undecaprenyl diphosphate + UDP + H(+). It participates in cell wall biogenesis; peptidoglycan biosynthesis. Its function is as follows. Cell wall formation. Catalyzes the transfer of a GlcNAc subunit on undecaprenyl-pyrophosphoryl-MurNAc-pentapeptide (lipid intermediate I) to form undecaprenyl-pyrophosphoryl-MurNAc-(pentapeptide)GlcNAc (lipid intermediate II). In Leuconostoc citreum (strain KM20), this protein is UDP-N-acetylglucosamine--N-acetylmuramyl-(pentapeptide) pyrophosphoryl-undecaprenol N-acetylglucosamine transferase.